A 418-amino-acid polypeptide reads, in one-letter code: Histidine--tRNA ligase (418 aa).

The protein belongs to the class-II aminoacyl-tRNA synthetase family. Homodimer.

The protein localises to the cytoplasm. The enzyme catalyses tRNA(His) + L-histidine + ATP = L-histidyl-tRNA(His) + AMP + diphosphate + H(+). The protein is Histidine--tRNA ligase of Dehalococcoides mccartyi (strain ATCC BAA-2100 / JCM 16839 / KCTC 5957 / BAV1).